The chain runs to 933 residues: Collagen alpha-2(I) chain (933 aa).

A compositionally biased stretch (gly residues) spans 1-16; sequence SGGFDFGVGLGPGPMG. Disordered stretches follow at residues 1–191 and 206–933; these read SGGF…LTGA and LPGP…AGVR. The span at 17 to 53 shows a compositional bias: low complexity; the sequence is LMGPRGPPGASGAPGPQGFQGPAGEPGEPGQTGPAGA. 4-hydroxyproline occurs at positions 24 and 30. The span at 57–72 shows a compositional bias: basic and acidic residues; that stretch reads KAGEDGHPGKPGRPGE. At lysine 94 the chain carries 5-hydroxylysine; alternate. An O-linked (Gal...) hydroxylysine; alternate glycan is attached at lysine 94. 3 stretches are compositionally biased toward low complexity: residues 108–137, 162–176, and 213–228; these read VGAP…SAGP, AGPR…VSGP, and PGPV…RGLV. Residues 280–289 show a composition bias toward gly residues; the sequence is GLRGGPGSRG. Proline 317 and proline 320 each carry 4-hydroxyproline. Residues 413 to 422 show a composition bias toward gly residues; that stretch reads GVQGGKGEQG. 2 stretches are compositionally biased toward low complexity: residues 468–485 and 497–507; these read PGES…SRGP and EPGVVGAPGTA. Over residues 508 to 517 the composition is skewed to gly residues; it reads GPAGSGGLPG. 3 stretches are compositionally biased toward low complexity: residues 540–584, 591–611, and 627–640; these read VGTT…PRGS, VGPA…QPGA, and PTGP…SGPN. Gly residues predominate over residues 644–656; sequence GPAGGRGDGGPPG. Over residues 657–667 the composition is skewed to low complexity; sequence LTGFPGAAGRT. Gly residues predominate over residues 704 to 713; sequence GETGAGGPPG. 2 stretches are compositionally biased toward low complexity: residues 721-748 and 756-781; these read SGEP…LGLP and LPGV…RGPS. The segment covering 795–807 has biased composition (basic and acidic residues); that stretch reads AGRDGLPGHKGER. Composition is skewed to low complexity over residues 809–831 and 840–860; these read YAGN…VGPA and PGPA…PSGP. Residues 864-874 are compositionally biased toward basic and acidic residues; the sequence is RGDKGEGDKGP.

It belongs to the fibrillar collagen family. Trimers of one alpha 2(I) and two alpha 1(I) chains. Interacts (via C-terminus) with TMEM131 (via PapD-L domain); the interaction is direct and is involved in assembly and TRAPPIII ER-to-Golgi transport complex-dependent secretion of collagen. Post-translationally, prolines at the third position of the tripeptide repeating unit (G-X-Y) are hydroxylated in some or all of the chains. Expressed in bones.

The protein localises to the secreted. It is found in the extracellular space. It localises to the extracellular matrix. Type I collagen is a member of group I collagen (fibrillar forming collagen). This is Collagen alpha-2(I) chain from Glyptodon sp. (strain SLP-2019) (Giant armadillo).